The following is a 131-amino-acid chain: MSAKAEKKPASKAPAEKKPAAKKTSTSTDGKKRSKARKETYSSYIYKVLKQTHPDTGISQKSMSILNSFVNDIFERIATEASKLAAYNKKSTISAREIQTAVRLILPGELAKHAVSEGTRAVTKYSSSTQA.

Over residues 1–19 (MSAKAEKKPASKAPAEKKP) the composition is skewed to basic and acidic residues. The disordered stretch occupies residues 1-38 (MSAKAEKKPASKAPAEKKPAAKKTSTSTDGKKRSKARK). An N6-acetyllysine; alternate mark is found at lysine 7 and lysine 8. Glycyl lysine isopeptide (Lys-Gly) (interchain with G-Cter in SUMO); alternate cross-links involve residues lysine 7 and lysine 8. Serine 11 carries the phosphoserine modification. N6-acetyllysine is present on lysine 12. Residues lysine 17, lysine 18, lysine 22, and lysine 23 each carry the N6-acetyllysine; alternate modification. Glycyl lysine isopeptide (Lys-Gly) (interchain with G-Cter in SUMO); alternate cross-links involve residues lysine 17 and lysine 18. At lysine 22 the chain carries N6-butyryllysine; alternate. At lysine 23 the chain carries N6-methyllysine; alternate. An N6-succinyllysine modification is found at lysine 35. An N6,N6-dimethyllysine modification is found at lysine 38. Lysine 47 carries the post-translational modification N6-succinyllysine. A Glycyl lysine isopeptide (Lys-Gly) (interchain with G-Cter in ubiquitin) cross-link involves residue lysine 124.

This sequence belongs to the histone H2B family. The nucleosome is a histone octamer containing two molecules each of H2A, H2B, H3 and H4 assembled in one H3-H4 heterotetramer and two H2A-H2B heterodimers. The octamer wraps approximately 147 bp of DNA. In terms of processing, monoubiquitinated by the RAD6/UBC2-BRE1 complex to form H2BK123ub1. H2BK123ub1 gives a specific tag for epigenetic transcriptional activation and is also prerequisite for H3K4me and H3K79me formation. H2BK123ub1 also modulates the formation of double-strand breaks during meiosis and is a prerequisite for DNA-damage checkpoint activation. Deubiquitination is performed by UBP8 in presence of SGF11. Phosphorylated by STE20 to form H2BS10ph during progression through meiotic prophase. May be correlated with chromosome condensation. H2BS10ph is also formed after H(2)O(2) treatment, and is a step leading to apoptosis. Post-translationally, acetylated by GCN5, a component of the SAGA complex, to form H2BK11ac and H2BK16ac. H2BK16ac can also be formed by ESA1, a component of the NuA4 histone acetyltransferase (HAT) complex. Acetylation of N-terminal lysines and particularly formation of H2BK11acK16ac has a positive effect on transcription. In terms of processing, sumoylation to form H2BK6su or H2BK7su, and probably also H2BK16su or H2BK17su, occurs preferentially near the telomeres and represses gene transcription.

The protein resides in the nucleus. It is found in the chromosome. Core component of nucleosome. Nucleosomes wrap and compact DNA into chromatin, limiting DNA accessibility to the cellular machineries which require DNA as a template. Histones thereby play a central role in transcription regulation, DNA repair, DNA replication and chromosomal stability. DNA accessibility is regulated via a complex set of post-translational modifications of histones, also called histone code, and nucleosome remodeling. The protein is Histone H2B.1 (HTB1) of Saccharomyces cerevisiae (strain ATCC 204508 / S288c) (Baker's yeast).